A 774-amino-acid polypeptide reads, in one-letter code: Two pore channel protein 2 (774 aa).

Residues 1 to 92 (MEEEPLLAGS…GSLRLYRWYY (92 aa)) are Cytoplasmic-facing. A helical transmembrane segment spans residues 93–113 (SNLCQWGLGLTIAVVLALAFI). Over 114–140 (ERPSSLTYTSDIRVKPKPWEPPCGMTE) the chain is Extracellular. Residues 141–161 (GIEIVCLCIFILDVTAKGYLI) form a helical membrane-spanning segment. At 162 to 170 (GWEEFRMNK) the chain is on the cytoplasmic side. Residues 171 to 191 (WLLAYLIVITASVIDWMLSIS) traverse the membrane as a helical segment. Residues 192-197 (MLCDEN) lie on the Extracellular side of the membrane. The helical transmembrane segment at 198-218 (LRVRRLIRPFFLLQNSSLMKK) threads the bilayer. Residues 217-221 (KKTLK) are interaction with phosphatidylinositol 3,5-bisphosphate. The Cytoplasmic segment spans residues 219-232 (TLKCIKRTLPEIAS). The helical transmembrane segment at 233–253 (VILLLALHICLFTMIGMLIFA) threads the bilayer. The Extracellular segment spans residues 254–267 (KSDDPKQNGEWQTY). Residues 268 to 292 (FRNLPKALSSLLVLLTTANNPDVMI) constitute an intramembrane region (helical; Pore-forming). The Extracellular portion of the chain corresponds to 293–302 (PAYSLNRGYS). The chain crosses the membrane as a helical span at residues 303–323 (IFFILFSVFGTYLLMNLMTAI). Residues 324 to 452 (IYNQFRGYLL…YVYSHYYISV (129 aa)) lie on the Cytoplasmic side of the membrane. A helical membrane pass occupies residues 453-475 (LGNAVALANVICICTVLVLNAEK). Over 476-486 (SASEKNYFYME) the chain is Extracellular. A helical membrane pass occupies residues 487–507 (IINCIFILYYLIEMLLKIVAF). Residues 508-518 (GWKGYLSYRNN) lie on the Cytoplasmic side of the membrane. The chain crosses the membrane as a helical span at residues 519 to 539 (IFDGFLTVLLLAIQIVIFITF). Residues 540–564 (KIPYVDVDPVPRHVMALWEMIRLVN) are Extracellular-facing. A helical transmembrane segment spans residues 565–585 (MLIVFRFLRIIPEIKLMAVVA). Residues 586-596 (STIVDLVKNLR) are Cytoplasmic-facing. A helical membrane pass occupies residues 597–617 (AFAGILLVVYYMFAVLGIWLF). At 618–658 (QGAISPPSNMSLVSNSSLENITGPYSMECGTFEQLEYWPNN) the chain is on the extracellular side. 3 N-linked (GlcNAc...) asparagine glycosylation sites follow: Asn-626, Asn-632, and Asn-637. The helical; Pore-forming intramembrane region spans 659 to 681 (FDDFASSLILLYNIMVVNNWHVF). Residues 682–696 (TDAYARYTTDWSLVY) are Extracellular-facing. Residues 697-717 (FVVWWLTSSVMWVNLFVALIL) traverse the membrane as a helical segment. Residues 718–774 (ENFTYKWDRSNGLSVEDVERIAYQSTVQLMFKEHVKEPTEEELLAQLHQHPHLHLSW) lie on the Cytoplasmic side of the membrane.

Belongs to the calcium channel alpha-1 subunit (TC 1.A.1.11) family. Two pore calcium channel subfamily. Homodimer. Post-translationally, N-glycosylated.

It is found in the late endosome membrane. The protein localises to the lysosome membrane. The catalysed reaction is Na(+)(in) = Na(+)(out). The enzyme catalyses Ca(2+)(in) = Ca(2+)(out). Functionally, intracellular channel initially characterized as a non-selective Ca(2+)-permeable channel activated by NAADP (nicotinic acid adenine dinucleotide phosphate), it is also a highly-selective Na(+) channel activated directly by PI(3,5)P2 (phosphatidylinositol 3,5-bisphosphate). Localizes to the lysosomal and late endosome membranes where it regulates organellar membrane excitability, membrane trafficking, and pH homeostasis. This Danio rerio (Zebrafish) protein is Two pore channel protein 2 (tpcn2).